A 633-amino-acid polypeptide reads, in one-letter code: Guanylate-binding protein 6 (633 aa).

Positions 1-310 (MESGPKMLAP…EAINSGAVPC (310 aa)) are GTPase domain (Globular). One can recognise a GB1/RHD3-type G domain in the interval 35–277 (SQPVVVVAIV…FCSYIFTHAR (243 aa)). GTP is bound by residues 45 to 52 (GLYRTGKS), 67 to 69 (LGS), and 97 to 101 (DTEGL).

Belongs to the TRAFAC class dynamin-like GTPase superfamily. GB1/RHD3 GTPase family. GB1 subfamily. (Microbial infection) Ubiquitinated by S.flexneri IpaH9.8, leading to its degradation by the proteasome, thereby preventing its ability to promote host defense against bacterial infection.

The protein localises to the cytoplasmic vesicle. It catalyses the reaction GTP + H2O = GDP + phosphate + H(+). Interferon (IFN)-inducible GTPase that plays important roles in innate immunity against a diverse range of bacterial, viral and protozoan pathogens, such as bacterial pathogens Listeria monocytogenes and Mycobacterium bovis BCG as well as the protozoan pathogen Toxoplasma gondii. Confers protection to several pathogens, including the bacterial pathogens Listeria monocytogenes and Mycobacterium bovis BCG as well as the protozoan pathogen Toxoplasma gondii. The chain is Guanylate-binding protein 6 (GBP6) from Homo sapiens (Human).